A 122-amino-acid polypeptide reads, in one-letter code: Large ribosomal subunit protein uL18 (122 aa).

Belongs to the universal ribosomal protein uL18 family. Part of the 50S ribosomal subunit; part of the 5S rRNA/L5/L18/L25 subcomplex. Contacts the 5S and 23S rRNAs.

Functionally, this is one of the proteins that bind and probably mediate the attachment of the 5S RNA into the large ribosomal subunit, where it forms part of the central protuberance. This is Large ribosomal subunit protein uL18 from Prochlorococcus marinus (strain AS9601).